Reading from the N-terminus, the 445-residue chain is Trigger factor (445 aa).

A PPIase FKBP-type domain is found at Gly-162–Thr-247.

Belongs to the FKBP-type PPIase family. Tig subfamily.

Its subcellular location is the cytoplasm. The catalysed reaction is [protein]-peptidylproline (omega=180) = [protein]-peptidylproline (omega=0). Involved in protein export. Acts as a chaperone by maintaining the newly synthesized protein in an open conformation. Functions as a peptidyl-prolyl cis-trans isomerase. The polypeptide is Trigger factor (Rickettsia massiliae (strain Mtu5)).